The following is an 89-amino-acid chain: C-C motif chemokine 18 (89 aa).

The first 20 residues, 1–20, serve as a signal peptide directing secretion; it reads MKGLAAALLVLVCTMALCSC. Cystine bridges form between Cys-30–Cys-54 and Cys-31–Cys-70.

It belongs to the intercrine beta (chemokine CC) family. Post-translationally, the Cys-30/Cys-54 disulfide bond is required for activity. As to expression, expressed at high levels in lung, lymph nodes, placenta, bone marrow, dendritic cells present in germinal centers and T-cell areas of secondary lymphoid organs and macrophages derived from peripheral blood monocytes. Not expressed by peripheral blood monocytes and a monocyte-to-macrophage differentiation is a prerequisite for expression. Expressed in synovial fluids from patients with rheumatoid and septic arthritis and in ovarian carcinoma ascitic fluid.

It is found in the secreted. Its function is as follows. Chemotactic factor that attracts lymphocytes but not monocytes or granulocytes. May be involved in B-cell migration into B-cell follicles in lymph nodes. Attracts naive T-lymphocytes toward dendritic cells and activated macrophages in lymph nodes, has chemotactic activity for naive T-cells, CD4+ and CD8+ T-cells and thus may play a role in both humoral and cell-mediated immunity responses. The protein is C-C motif chemokine 18 (CCL18) of Homo sapiens (Human).